Here is a 313-residue protein sequence, read N- to C-terminus: Acetaldehyde dehydrogenase (313 aa).

Position 15 to 18 (15 to 18 (SGNI)) interacts with NAD(+). Cysteine 133 (acyl-thioester intermediate) is an active-site residue. NAD(+) contacts are provided by residues 164-172 (SAGPGTRAN) and asparagine 289.

The protein belongs to the acetaldehyde dehydrogenase family.

The catalysed reaction is acetaldehyde + NAD(+) + CoA = acetyl-CoA + NADH + H(+). This is Acetaldehyde dehydrogenase from Rhizobium rhizogenes (strain K84 / ATCC BAA-868) (Agrobacterium radiobacter).